The primary structure comprises 154 residues: MAARLCCQLDPARDVLCLRPVGAESRGRPFSGPFGTLSSPSPSAVSTDHGAHLSLRGLPVCAFSSAGPCALRFTSARRMETTVNAHQFLPKVLYKRTLGLSVMSTTDLEAYFKDCLFKDWEELGEETRLMIFVLGGCRHKLVCAPAPCNFFTSA.

Residues 68 to 117 (PCALRFTSARRMETTVNAHQFLPKVLYKRTLGLSVMSTTDLEAYFKDCLF) form a mitochondrial targeting sequence region.

This sequence belongs to the orthohepadnavirus protein X family. In terms of assembly, may form homodimer. May interact with host CEBPA, CFLAR, CREB1, DDB1, E4F1, HBXIP, HSPD1/HSP60, NFKBIA, POLR2E and SMAD4. Interacts with host SMC5-SMC6 complex and induces its degradation. Interacts with host TRPC4AP; leading to prevent ubiquitination of TRPC4AP. Interacts with host PLSCR1; this interaction promotes ubiquitination and degradation of HBx and impairs HBx-mediated cell proliferation. A fraction may be phosphorylated in insect cells and HepG2 cells, a human hepatoblastoma cell line. Phosphorylated in vitro by host protein kinase C or mitogen-activated protein kinase. N-acetylated in insect cells.

It is found in the host cytoplasm. Its subcellular location is the host nucleus. The protein resides in the host mitochondrion. Its function is as follows. Multifunctional protein that plays a role in silencing host antiviral defenses and promoting viral transcription. Does not seem to be essential for HBV infection. May be directly involved in development of cirrhosis and liver cancer (hepatocellular carcinoma). Most of cytosolic activities involve modulation of cytosolic calcium. The effect on apoptosis is controversial depending on the cell types in which the studies have been conducted. May induce apoptosis by localizing in mitochondria and causing loss of mitochondrial membrane potential. May also modulate apoptosis by binding host CFLAR, a key regulator of the death-inducing signaling complex (DISC). Promotes viral transcription by using the host E3 ubiquitin ligase DDB1 to target the SMC5-SMC6 complex to proteasomal degradation. This host complex would otherwise bind to viral episomal DNA, and prevents its transcription. Moderately stimulates transcription of many different viral and cellular transcription elements. Promoters and enhancers stimulated by HBx contain DNA binding sites for NF-kappa-B, AP-1, AP-2, c-EBP, ATF/CREB, or the calcium-activated factor NF-AT. In Homo sapiens (Human), this protein is Protein X.